The primary structure comprises 311 residues: DNA replication terminus site-binding protein (311 aa).

This sequence belongs to the Tus family.

It is found in the cytoplasm. Trans-acting protein required for termination of DNA replication. Binds to DNA replication terminator sequences (terA to terF) to prevent the passage of replication forks. The termination efficiency will be affected by the affinity of this protein for the terminator sequence. The polypeptide is DNA replication terminus site-binding protein (Yersinia pestis).